The chain runs to 499 residues: Potassium channel subfamily K member 5 (499 aa).

The Cytoplasmic portion of the chain corresponds to 1–7 (MVDRGPL). Residues 8–26 (LTSAIIFYLAIGAAIFEVL) traverse the membrane as a helical segment. The N-linked (GlcNAc...) asparagine glycan is linked to N77. Positions 85–112 (WPNAMIFAATVITTIGYGNVAPKTPAGR) form an intramembrane region, pore-forming. Residues T98, I99, G100, and Y101 each contribute to the K(+) site. The selectivity filter 1 stretch occupies residues 98 to 103 (TIGYGN). A helical membrane pass occupies residues 113–133 (LFCVFYGLFGVPLCLTWISAL). The Cytoplasmic segment spans residues 134 to 157 (GKFFGGRAKRLGQFLTKRGVSLRK). A helical transmembrane segment spans residues 158–180 (AQITCTVIFIVWGVLVHLVIPPF). Positions 190–215 (YIEGLYYSFITISTIGFGDFVAGVNP) form an intramembrane region, pore-forming. K(+) is bound by residues T203, I204, G205, and F206. A selectivity filter 2 region spans residues 203-208 (TIGFGD). The helical transmembrane segment at 230–250 (WIYLGLAWLSLFVNWKVSMFV) threads the bilayer. The Cytoplasmic portion of the chain corresponds to 251 to 325 (EVHKAIKKRR…SGGGETGPGP (75 aa)). Disordered stretches follow at residues 312–335 (AMKT…GGLP), 360–388 (QTLR…SPAP), and 428–499 (GLSD…PKGT). Gly residues predominate over residues 316–334 (SGGGETGPGPGLGPQGGGL). A compositionally biased stretch (basic and acidic residues) spans 370–382 (RSPDEEAVARAPE). A Phosphoserine modification is found at S371. The span at 466 to 480 (SSSESTFTSTESELS) shows a compositional bias: low complexity.

This sequence belongs to the two pore domain potassium channel (TC 1.A.1.8) family. In terms of assembly, homodimer; disulfide-linked. Heterodimer with KCNK16 and KCNK17. In terms of tissue distribution, abundant expression in kidney, also detected in liver, placenta and small intestine. In the kidney, expression is restricted to the distal tubules and collecting ducts. Not expressed in proximal tubules or glomeruli. Expressed in pancreas, in both endocrine (alpha, beta, gamma, delta, and epsilon) and exocrine (acinar and ductal) cells.

The protein localises to the membrane. The catalysed reaction is K(+)(in) = K(+)(out). The channel conductance is stimulated by extracellular alkaline pH. Inhibited by quinine, quinidine and external acidification. Its function is as follows. K(+) channel that conducts voltage-dependent outward rectifying currents upon membrane depolarization. Voltage sensing is coupled to K(+) electrochemical gradient in an 'ion flux gating' mode where outward but not inward ion flow opens the gate. Homo- and heterodimerizes to form functional channels with distinct regulatory and gating properties. The sequence is that of Potassium channel subfamily K member 5 from Homo sapiens (Human).